The sequence spans 159 residues: Ribosome-binding factor A (159 aa).

Positions 127–159 are disordered; sequence TYAGEADPYRRPAVDDAGDSADDADPAEDERPS. The span at 142–159 shows a compositional bias: acidic residues; that stretch reads DAGDSADDADPAEDERPS.

Belongs to the RbfA family. As to quaternary structure, monomer. Binds 30S ribosomal subunits, but not 50S ribosomal subunits or 70S ribosomes.

It localises to the cytoplasm. Its function is as follows. One of several proteins that assist in the late maturation steps of the functional core of the 30S ribosomal subunit. Associates with free 30S ribosomal subunits (but not with 30S subunits that are part of 70S ribosomes or polysomes). Required for efficient processing of 16S rRNA. May interact with the 5'-terminal helix region of 16S rRNA. The protein is Ribosome-binding factor A of Beutenbergia cavernae (strain ATCC BAA-8 / DSM 12333 / CCUG 43141 / JCM 11478 / NBRC 16432 / NCIMB 13614 / HKI 0122).